Consider the following 290-residue polypeptide: Pyridoxal kinase PdxY (290 aa).

Residues Ser12 and 47-48 (TQ) contribute to the substrate site. Residues Asp114, Glu151, Lys184, and 211-214 (RPLL) each bind ATP. Position 225 (Asp225) interacts with substrate.

This sequence belongs to the pyridoxine kinase family. PdxY subfamily. In terms of assembly, homodimer. The cofactor is Mg(2+).

It carries out the reaction pyridoxal + ATP = pyridoxal 5'-phosphate + ADP + H(+). It participates in cofactor metabolism; pyridoxal 5'-phosphate salvage; pyridoxal 5'-phosphate from pyridoxal: step 1/1. In terms of biological role, pyridoxal kinase involved in the salvage pathway of pyridoxal 5'-phosphate (PLP). Catalyzes the phosphorylation of pyridoxal to PLP. The protein is Pyridoxal kinase PdxY of Pseudomonas fluorescens (strain Pf0-1).